Here is a 78-residue protein sequence, read N- to C-terminus: Large ribosomal subunit protein bL28 (78 aa).

It belongs to the bacterial ribosomal protein bL28 family.

This Synechococcus sp. (strain CC9311) protein is Large ribosomal subunit protein bL28.